The following is a 1287-amino-acid chain: DNA-directed RNA polymerase subunit beta (1287 aa).

The protein belongs to the RNA polymerase beta chain family. In terms of assembly, the RNAP catalytic core consists of 2 alpha, 1 beta, 1 beta' and 1 omega subunit. When a sigma factor is associated with the core the holoenzyme is formed, which can initiate transcription.

The enzyme catalyses RNA(n) + a ribonucleoside 5'-triphosphate = RNA(n+1) + diphosphate. Functionally, DNA-dependent RNA polymerase catalyzes the transcription of DNA into RNA using the four ribonucleoside triphosphates as substrates. The chain is DNA-directed RNA polymerase subunit beta from Salinibacter ruber (strain DSM 13855 / M31).